Reading from the N-terminus, the 145-residue chain is D-aminoacyl-tRNA deacylase (145 aa).

The short motif at 137–138 is the Gly-cisPro motif, important for rejection of L-amino acids element; it reads GP.

Belongs to the DTD family. Homodimer.

The protein resides in the cytoplasm. It carries out the reaction glycyl-tRNA(Ala) + H2O = tRNA(Ala) + glycine + H(+). The enzyme catalyses a D-aminoacyl-tRNA + H2O = a tRNA + a D-alpha-amino acid + H(+). Its function is as follows. An aminoacyl-tRNA editing enzyme that deacylates mischarged D-aminoacyl-tRNAs. Also deacylates mischarged glycyl-tRNA(Ala), protecting cells against glycine mischarging by AlaRS. Acts via tRNA-based rather than protein-based catalysis; rejects L-amino acids rather than detecting D-amino acids in the active site. By recycling D-aminoacyl-tRNA to D-amino acids and free tRNA molecules, this enzyme counteracts the toxicity associated with the formation of D-aminoacyl-tRNA entities in vivo and helps enforce protein L-homochirality. The chain is D-aminoacyl-tRNA deacylase from Streptomyces avermitilis (strain ATCC 31267 / DSM 46492 / JCM 5070 / NBRC 14893 / NCIMB 12804 / NRRL 8165 / MA-4680).